A 276-amino-acid polypeptide reads, in one-letter code: NAD-capped RNA hydrolase NudC (276 aa).

Arg82 is a binding site for substrate. Zn(2+) is bound by residues Cys112 and Cys115. Glu125 contributes to the substrate binding site. Residues Cys130 and Cys133 each contribute to the Zn(2+) site. Tyr138 serves as a coordination point for substrate. The region spanning 139–262 (PRISPSMIVL…SIARYLIDLY (124 aa)) is the Nudix hydrolase domain. Residues Ala172, Glu188, and Glu192 each contribute to the a divalent metal cation site. A Nudix box motif is present at residues 173 to 194 (GFAEPGESAEECLVREVREEVA). 206-213 (QCWPFPHS) contributes to the substrate binding site. Position 233 (Glu233) interacts with a divalent metal cation. Ala255 is a substrate binding site.

It belongs to the Nudix hydrolase family. NudC subfamily. In terms of assembly, homodimer. Requires Mg(2+) as cofactor. Mn(2+) is required as a cofactor. It depends on Zn(2+) as a cofactor.

It catalyses the reaction a 5'-end NAD(+)-phospho-ribonucleoside in mRNA + H2O = a 5'-end phospho-adenosine-phospho-ribonucleoside in mRNA + beta-nicotinamide D-ribonucleotide + 2 H(+). The catalysed reaction is NAD(+) + H2O = beta-nicotinamide D-ribonucleotide + AMP + 2 H(+). The enzyme catalyses NADH + H2O = reduced beta-nicotinamide D-ribonucleotide + AMP + 2 H(+). In terms of biological role, mRNA decapping enzyme that specifically removes the nicotinamide adenine dinucleotide (NAD) cap from a subset of mRNAs by hydrolyzing the diphosphate linkage to produce nicotinamide mononucleotide (NMN) and 5' monophosphate mRNA. The NAD-cap is present at the 5'-end of some mRNAs and stabilizes RNA against 5'-processing. Has preference for mRNAs with a 5'-end purine. Catalyzes the hydrolysis of a broad range of dinucleotide pyrophosphates. The polypeptide is NAD-capped RNA hydrolase NudC (Pseudomonas entomophila (strain L48)).